The sequence spans 236 residues: Phosphoribosylaminoimidazole-succinocarboxamide synthase (236 aa).

Belongs to the SAICAR synthetase family.

It carries out the reaction 5-amino-1-(5-phospho-D-ribosyl)imidazole-4-carboxylate + L-aspartate + ATP = (2S)-2-[5-amino-1-(5-phospho-beta-D-ribosyl)imidazole-4-carboxamido]succinate + ADP + phosphate + 2 H(+). Its pathway is purine metabolism; IMP biosynthesis via de novo pathway; 5-amino-1-(5-phospho-D-ribosyl)imidazole-4-carboxamide from 5-amino-1-(5-phospho-D-ribosyl)imidazole-4-carboxylate: step 1/2. This chain is Phosphoribosylaminoimidazole-succinocarboxamide synthase, found in Chlorobium phaeobacteroides (strain BS1).